Consider the following 921-residue polypeptide: Protein translocase subunit SecA (921 aa).

Residues Gln85, 103-107 (GEGKT), and Asp514 contribute to the ATP site. Positions 905, 907, 916, and 917 each coordinate Zn(2+).

This sequence belongs to the SecA family. As to quaternary structure, monomer and homodimer. Part of the essential Sec protein translocation apparatus which comprises SecA, SecYEG and auxiliary proteins SecDF-YajC and YidC. Zn(2+) serves as cofactor.

It localises to the cell inner membrane. Its subcellular location is the cytoplasm. The enzyme catalyses ATP + H2O + cellular proteinSide 1 = ADP + phosphate + cellular proteinSide 2.. Functionally, part of the Sec protein translocase complex. Interacts with the SecYEG preprotein conducting channel. Has a central role in coupling the hydrolysis of ATP to the transfer of proteins into and across the cell membrane, serving both as a receptor for the preprotein-SecB complex and as an ATP-driven molecular motor driving the stepwise translocation of polypeptide chains across the membrane. The chain is Protein translocase subunit SecA from Herminiimonas arsenicoxydans.